The chain runs to 410 residues: Chloride intracellular channel protein 5 (410 aa).

The G-site signature appears at 191 to 194; that stretch reads CPFS. Residues 193–213 form a helical membrane-spanning segment; it reads FSQRLFMILWLKGVVFNVTTV. The GST C-terminal domain maps to 260–400; the sequence is YPKLAAKHRE…AADSEIELAY (141 aa).

Belongs to the chloride channel CLIC family. Component of a multimeric complex consisting of several cytoskeletal proteins, including actin, ezrin, alpha-actinin, gelsolin, and IQGAP1. Interacts with AKAP9. Interacts with TPRN. TPRN, CLIC5 and PTPQR form concentric rings at the base of stereocilia and may form a complex. Interacts with EZR, MYO6 and RDX; the proteins may work together as a complex to stabilize linkages between the plasma membrane and subjacent actin cytoskeleton at the stereocilium base. In terms of tissue distribution, widely expressed in both fetal and adult human tissues. Isoform 1 is expressed in renal glomeruli endothelial cells and podocytes (at protein level).

The protein localises to the cytoplasm. Its subcellular location is the cytoskeleton. It is found in the cell cortex. It localises to the membrane. The protein resides in the apical cell membrane. The protein localises to the mitochondrion. Its subcellular location is the cell projection. It is found in the stereocilium. It localises to the golgi apparatus. The protein resides in the microtubule organizing center. The protein localises to the centrosome. The catalysed reaction is chloride(in) = chloride(out). The enzyme catalyses Na(+)(in) = Na(+)(out). It catalyses the reaction K(+)(in) = K(+)(out). With respect to regulation, inhibited by F-actin. In the soluble state, catalyzes glutaredoxin-like thiol disulfide exchange reactions with reduced glutathione as electron donor. Can insert into membranes and form non-selective ion channels almost equally permeable to Na(+), K(+) and Cl(-). Required for normal hearing. It is necessary for the formation of stereocilia in the inner ear and normal development of the organ of Corti. May play a role in the regulation of transepithelial ion absorption and secretion. Is required for the development and/or maintenance of the proper glomerular endothelial cell and podocyte architecture. Plays a role in formation of the lens suture in the eye, which is important for normal optical properties of the lens. The sequence is that of Chloride intracellular channel protein 5 from Homo sapiens (Human).